The following is a 246-amino-acid chain: 1-(5-phosphoribosyl)-5-[(5-phosphoribosylamino)methylideneamino] imidazole-4-carboxamide isomerase (246 aa).

D7 acts as the Proton acceptor in catalysis. Residue D129 is the Proton donor of the active site.

It belongs to the HisA/HisF family.

It localises to the cytoplasm. The catalysed reaction is 1-(5-phospho-beta-D-ribosyl)-5-[(5-phospho-beta-D-ribosylamino)methylideneamino]imidazole-4-carboxamide = 5-[(5-phospho-1-deoxy-D-ribulos-1-ylimino)methylamino]-1-(5-phospho-beta-D-ribosyl)imidazole-4-carboxamide. Its pathway is amino-acid biosynthesis; L-histidine biosynthesis; L-histidine from 5-phospho-alpha-D-ribose 1-diphosphate: step 4/9. In Buchnera aphidicola subsp. Acyrthosiphon pisum (strain Tuc7), this protein is 1-(5-phosphoribosyl)-5-[(5-phosphoribosylamino)methylideneamino] imidazole-4-carboxamide isomerase.